A 162-amino-acid polypeptide reads, in one-letter code: EF-hand calcium-binding domain-containing protein 11 (162 aa).

EF-hand domains are found at residues Ser18–Tyr53, Leu91–Lys126, and Leu127–Lys162. Residues Asp140, Asp142, Asp144, His146, and Asp151 each contribute to the Ca(2+) site.

The chain is EF-hand calcium-binding domain-containing protein 11 (Efcab11) from Mus musculus (Mouse).